Consider the following 365-residue polypeptide: Chaperone protein DnaJ (365 aa).

One can recognise a J domain in the interval 5 to 71; that stretch reads DFYEILGIAK…QKRQAYDQFG (67 aa). The CR-type zinc-finger motif lies at 128-206; that stretch reads GTTVKIRIPK…CHGKGVVHKQ (79 aa). 8 residues coordinate Zn(2+): Cys141, Cys144, Cys158, Cys161, Cys180, Cys183, Cys194, and Cys197. CXXCXGXG motif repeat units follow at residues 141-148, 158-165, 180-187, and 194-201; these read CDTCSGTG, CLTCGGAG, CNACSGTG, and CNNCHGKG.

The protein belongs to the DnaJ family. As to quaternary structure, homodimer. Zn(2+) is required as a cofactor.

The protein resides in the cytoplasm. Participates actively in the response to hyperosmotic and heat shock by preventing the aggregation of stress-denatured proteins and by disaggregating proteins, also in an autonomous, DnaK-independent fashion. Unfolded proteins bind initially to DnaJ; upon interaction with the DnaJ-bound protein, DnaK hydrolyzes its bound ATP, resulting in the formation of a stable complex. GrpE releases ADP from DnaK; ATP binding to DnaK triggers the release of the substrate protein, thus completing the reaction cycle. Several rounds of ATP-dependent interactions between DnaJ, DnaK and GrpE are required for fully efficient folding. Also involved, together with DnaK and GrpE, in the DNA replication of plasmids through activation of initiation proteins. The polypeptide is Chaperone protein DnaJ (Vesicomyosocius okutanii subsp. Calyptogena okutanii (strain HA)).